Reading from the N-terminus, the 486-residue chain is MTIQHKQDLAQIRAMVPEMRRVKSIHFIGIGGAGMSGIAEVLLNEGYQITGSDIAENAVTERLAQKGAKVYIGHQATNVAEASVVVVSTAINEANPEVKAAREARIPVVRRAEMLAELMRFRHGIAVAGTHGKTTTTALVTQIYSEAGLDPTFVNGGLVKSAGTNARLGSSRILIAEADESDASFLHLQPMVCIVTNIEADHMDTYGGDFETLKQTFIDFLHNLPFYGQAIVCIDDPVIRELIPRISRQVITYGFSEDADVRIENYHQEGQQGKFTVVRKDCEALDITLNIPGRHNALNAAAAIAVATEDEIGDDAILAAMIGTQGTGRRFEHLGEFETGNGNVMLVDDYGHHPTEVDVTIHAARNGWQDKRLVMIFQPHRYSRTRDLYDDFANVLEQVDVLVMLDVYAAGEKAIAGADSRSLCRTIRSRGKIDPIFVADTQQLPEVLANILQEGDLLLAQGAGDIGKVARQLAALELNISNMKAK.

Position 129–135 (129–135 (GTHGKTT)) interacts with ATP.

Belongs to the MurCDEF family.

It is found in the cytoplasm. The catalysed reaction is UDP-N-acetyl-alpha-D-muramate + L-alanine + ATP = UDP-N-acetyl-alpha-D-muramoyl-L-alanine + ADP + phosphate + H(+). The protein operates within cell wall biogenesis; peptidoglycan biosynthesis. Functionally, cell wall formation. The protein is UDP-N-acetylmuramate--L-alanine ligase of Vibrio vulnificus (strain YJ016).